The chain runs to 776 residues: Kinesin-like protein KIN-8A (776 aa).

Disordered regions lie at residues 1–31 and 80–135; these read MPVS…RGGA and VGEV…KSSH. The segment covering 7 to 26 has biased composition (low complexity); that stretch reads ASAAGGQPWSSAAPAPASAP. Over residues 123–132 the composition is skewed to pro residues; it reads PPPPPAPPPK. A Kinesin motor domain is found at 205-534; it reads RIMVFVRLRP…LHWADRAKEI (330 aa). ATP is bound at residue 297–304; that stretch reads GATGAGKT. The stretch at 554 to 592 forms a coiled coil; the sequence is TDQAKLVLELQKENSELRQQLARQQQKLLTVQAQTLASN. A disordered region spans residues 590–611; sequence ASNASPQQSPAPSAQISTPCST. Over residues 593–604 the composition is skewed to low complexity; it reads ASPQQSPAPSAQ. Residues 634 to 671 adopt a coiled-coil conformation; that stretch reads AAENAQVRDLQRKVKAMEAEIEKMKKEHLLQLKQKDEF.

It belongs to the TRAFAC class myosin-kinesin ATPase superfamily. Kinesin family. KIN-8 subfamily.

This Oryza sativa subsp. japonica (Rice) protein is Kinesin-like protein KIN-8A.